A 309-amino-acid chain; its full sequence is Taste receptor type 2 member 46 (309 aa).

A topological domain (extracellular) is located at residue M1. Residues 2–22 (ITFLPIIFSILIVVTFVIGNF) traverse the membrane as a helical segment. Residues 23 to 46 (ANGFIALVNSIEWFKRQKISFADQ) are Cytoplasmic-facing. A helical membrane pass occupies residues 47 to 67 (ILTALAVSRVGLLWVLVLNWY). At 68–86 (ATELNPAFNSIEVRITAYN) the chain is on the extracellular side. Residues 87 to 107 (VWAVINHFSNWLATSLSIFYL) form a helical membrane-spanning segment. Residues 108–126 (LKIANFSNLIFLHLKRRVK) lie on the Cytoplasmic side of the membrane. A helical transmembrane segment spans residues 127 to 147 (SVVLVILLGPLLFLVCHLFVI). Topologically, residues 148-178 (NMNQIIWTKEYEGNMTWKIKLRSAMYLSNTT) are extracellular. Residues N161 and N176 are each glycosylated (N-linked (GlcNAc...) asparagine). Residues 179–199 (VTILANLVPFTLTLISFLLLI) traverse the membrane as a helical segment. Residues 200–229 (CSLCKHLKKMQLHGKGSQDPSMKVHIKALQ) are Cytoplasmic-facing. A helical transmembrane segment spans residues 230 to 250 (TVTSFLLLCAIYFLSIIMSVW). Residues 251–259 (SFESLENKP) are Extracellular-facing. A helical transmembrane segment spans residues 260–280 (VFMFCEAIAFSYPSTHPFILI). Topologically, residues 281–309 (WGNKKLKQTFLSVLWHVRYWVKGEKPSSS) are cytoplasmic.

This sequence belongs to the G-protein coupled receptor T2R family. As to expression, expressed in subsets of taste receptor cells of the tongue and exclusively in gustducin-positive cells. Expressed on ciliated airway epithelium.

The protein localises to the membrane. Its subcellular location is the cell projection. It localises to the cilium membrane. Functionally, receptor that may play a role in the perception of bitterness and is gustducin-linked. May play a role in sensing the chemical composition of the gastrointestinal content. The activity of this receptor may stimulate alpha gustducin, mediate PLC-beta-2 activation and lead to the gating of TRPM5. In airway epithelial cells, binding of bitter compounds increases the intracellular calcium ion concentration and stimulates ciliary beat frequency. In Homo sapiens (Human), this protein is Taste receptor type 2 member 46 (TAS2R46).